A 542-amino-acid chain; its full sequence is CTP synthase (542 aa).

An amidoligase domain region spans residues Met1 to Ile265. Ser13 contacts CTP. Ser13 serves as a coordination point for UTP. Position 14–19 (Ser14–Ile19) interacts with ATP. Residue Tyr54 coordinates L-glutamine. Asp71 is an ATP binding site. Residues Asp71 and Glu139 each coordinate Mg(2+). Residues Asp146–Glu148, Lys186–Gln191, and Lys222 each bind CTP. Residues Lys186 to Gln191 and Lys222 contribute to the UTP site. One can recognise a Glutamine amidotransferase type-1 domain in the interval Thr291–Leu541. An L-glutamine-binding site is contributed by Gly353. Cys380 serves as the catalytic Nucleophile; for glutamine hydrolysis. Residues Phe381–Gln384, Glu404, and Arg469 contribute to the L-glutamine site. Catalysis depends on residues His514 and Glu516.

This sequence belongs to the CTP synthase family. Homotetramer.

The catalysed reaction is UTP + L-glutamine + ATP + H2O = CTP + L-glutamate + ADP + phosphate + 2 H(+). The enzyme catalyses L-glutamine + H2O = L-glutamate + NH4(+). It carries out the reaction UTP + NH4(+) + ATP = CTP + ADP + phosphate + 2 H(+). It functions in the pathway pyrimidine metabolism; CTP biosynthesis via de novo pathway; CTP from UDP: step 2/2. With respect to regulation, allosterically activated by GTP, when glutamine is the substrate; GTP has no effect on the reaction when ammonia is the substrate. The allosteric effector GTP functions by stabilizing the protein conformation that binds the tetrahedral intermediate(s) formed during glutamine hydrolysis. Inhibited by the product CTP, via allosteric rather than competitive inhibition. Its function is as follows. Catalyzes the ATP-dependent amination of UTP to CTP with either L-glutamine or ammonia as the source of nitrogen. Regulates intracellular CTP levels through interactions with the four ribonucleotide triphosphates. The polypeptide is CTP synthase (Brucella suis (strain ATCC 23445 / NCTC 10510)).